Reading from the N-terminus, the 608-residue chain is Phosphomethylpyrimidine synthase (608 aa).

Residues asparagine 216, methionine 245, tyrosine 274, histidine 310, 330–332 (SRG), 371–374 (DGLR), and glutamate 410 contribute to the substrate site. Zn(2+) is bound at residue histidine 414. Tyrosine 437 contributes to the substrate binding site. Position 478 (histidine 478) interacts with Zn(2+). The [4Fe-4S] cluster site is built by cysteine 558, cysteine 561, and cysteine 566.

This sequence belongs to the ThiC family. Homodimer. [4Fe-4S] cluster serves as cofactor.

The enzyme catalyses 5-amino-1-(5-phospho-beta-D-ribosyl)imidazole + S-adenosyl-L-methionine = 4-amino-2-methyl-5-(phosphooxymethyl)pyrimidine + CO + 5'-deoxyadenosine + formate + L-methionine + 3 H(+). The protein operates within cofactor biosynthesis; thiamine diphosphate biosynthesis. Functionally, catalyzes the synthesis of the hydroxymethylpyrimidine phosphate (HMP-P) moiety of thiamine from aminoimidazole ribotide (AIR) in a radical S-adenosyl-L-methionine (SAM)-dependent reaction. In Ruegeria sp. (strain TM1040) (Silicibacter sp.), this protein is Phosphomethylpyrimidine synthase.